The primary structure comprises 182 residues: CDP-diacylglycerol--glycerol-3-phosphate 3-phosphatidyltransferase (182 aa).

At Gln-2–Phe-12 the chain is on the cytoplasmic side. The helical transmembrane segment at Arg-13–Leu-37 threads the bilayer. Topologically, residues Ile-38–Thr-60 are periplasmic. Residues Arg-61–Leu-81 traverse the membrane as a helical segment. The Cytoplasmic segment spans residues Val-82–Tyr-86. A helical transmembrane segment spans residues His-87–Ala-107. At Leu-108–Pro-145 the chain is on the periplasmic side. Residues Asn-146–Met-168 traverse the membrane as a helical segment. At Leu-169–Asp-181 the chain is on the cytoplasmic side.

This sequence belongs to the CDP-alcohol phosphatidyltransferase class-I family.

The protein localises to the cell inner membrane. The catalysed reaction is a CDP-1,2-diacyl-sn-glycerol + sn-glycerol 3-phosphate = a 1,2-diacyl-sn-glycero-3-phospho-(1'-sn-glycero-3'-phosphate) + CMP + H(+). The protein operates within phospholipid metabolism; phosphatidylglycerol biosynthesis; phosphatidylglycerol from CDP-diacylglycerol: step 1/2. In terms of biological role, catalyzes the conversion of cytidine diphosphate diacylglycerol (CDP-DG) and glycerol 3-phosphate into phosphatidylglycerol. Essential for the synthesis of anionic phospholipids, thereby playing a role in balancing the ratio of zwitterionic and anionic phospholipids, which is thought to be important for normal membrane function. The chain is CDP-diacylglycerol--glycerol-3-phosphate 3-phosphatidyltransferase from Salmonella paratyphi A (strain ATCC 9150 / SARB42).